A 462-amino-acid chain; its full sequence is ATP synthase subunit beta (462 aa).

An ATP-binding site is contributed by 149 to 156; that stretch reads GGAGVGKT.

Belongs to the ATPase alpha/beta chains family. F-type ATPases have 2 components, CF(1) - the catalytic core - and CF(0) - the membrane proton channel. CF(1) has five subunits: alpha(3), beta(3), gamma(1), delta(1), epsilon(1). CF(0) has three main subunits: a(1), b(2) and c(9-12). The alpha and beta chains form an alternating ring which encloses part of the gamma chain. CF(1) is attached to CF(0) by a central stalk formed by the gamma and epsilon chains, while a peripheral stalk is formed by the delta and b chains.

Its subcellular location is the cell inner membrane. It carries out the reaction ATP + H2O + 4 H(+)(in) = ADP + phosphate + 5 H(+)(out). In terms of biological role, produces ATP from ADP in the presence of a proton gradient across the membrane. The catalytic sites are hosted primarily by the beta subunits. In Fusobacterium nucleatum subsp. nucleatum (strain ATCC 25586 / DSM 15643 / BCRC 10681 / CIP 101130 / JCM 8532 / KCTC 2640 / LMG 13131 / VPI 4355), this protein is ATP synthase subunit beta.